A 155-amino-acid chain; its full sequence is 6,7-dimethyl-8-ribityllumazine synthase (155 aa).

Residues Phe24, 58 to 60 (AFE), and 82 to 84 (VII) contribute to the 5-amino-6-(D-ribitylamino)uracil site. 87–88 (ST) serves as a coordination point for (2S)-2-hydroxy-3-oxobutyl phosphate. His90 functions as the Proton donor in the catalytic mechanism. 5-amino-6-(D-ribitylamino)uracil is bound at residue Phe115. Arg129 contributes to the (2S)-2-hydroxy-3-oxobutyl phosphate binding site.

Belongs to the DMRL synthase family.

The enzyme catalyses (2S)-2-hydroxy-3-oxobutyl phosphate + 5-amino-6-(D-ribitylamino)uracil = 6,7-dimethyl-8-(1-D-ribityl)lumazine + phosphate + 2 H2O + H(+). It participates in cofactor biosynthesis; riboflavin biosynthesis; riboflavin from 2-hydroxy-3-oxobutyl phosphate and 5-amino-6-(D-ribitylamino)uracil: step 1/2. Its function is as follows. Catalyzes the formation of 6,7-dimethyl-8-ribityllumazine by condensation of 5-amino-6-(D-ribitylamino)uracil with 3,4-dihydroxy-2-butanone 4-phosphate. This is the penultimate step in the biosynthesis of riboflavin. This Pelodictyon phaeoclathratiforme (strain DSM 5477 / BU-1) protein is 6,7-dimethyl-8-ribityllumazine synthase.